The primary structure comprises 239 residues: Phosphothreonine lyase OspF (239 aa).

His-104 acts as the Proton donor in catalysis. The active-site Proton acceptor is the Lys-134.

Belongs to the phosphothreonine lyase family.

It is found in the secreted. In terms of biological role, catalyzes the removal of the phosphate group from the phosphothreonine in the mitogen-activated protein kinases p38, phosphothreonine in the mitogen-activated protein kinases such as MAPK2/ERK2, MAPK3/ERK1, MAPK8 and MAPK14 in an irreversible reaction, thus preventing the downstream phosphorylation of histone H3. This epigenetic modification results in inhibition of the transcription of a specific subset of pro-inflammatory genes, and ultimately to a reduced immune response against the invading pathogen. The diminished immune response enhances the bacterium's ability to disseminate and multiply within the host. The polypeptide is Phosphothreonine lyase OspF (ospF) (Shigella boydii serotype 4 (strain Sb227)).